A 3004-amino-acid polypeptide reads, in one-letter code: Guanylate cyclase beta (3004 aa).

Residues 1 to 66 (MKETDKIKSE…FSLYNFIRRL (66 aa)) lie on the Cytoplasmic side of the membrane. Residues 67 to 87 (ISLDAVIVYTLFMTVYIFSEI) traverse the membrane as a helical segment. The Extracellular segment spans residues 88 to 94 (SQGITKK). The helical transmembrane segment at 95-115 (YLFVDTAISLFLNIGILVVIE) threads the bilayer. Residues 116–300 (SLFELKLLKD…TFCIKMNNVV (185 aa)) are Cytoplasmic-facing. A helical transmembrane segment spans residues 301–321 (YYLIFMYILFVLLSIIIKAIF). The Extracellular portion of the chain corresponds to 322–334 (YRKGKLLENSNDT). N-linked (GlcNAc...) asparagine glycosylation occurs at Asn-332. A helical membrane pass occupies residues 335–355 (FFTVLEDFIGLYILVLPVMLY). Over 356 to 991 (SEKSLIYIIQ…GRLNRFSLCR (636 aa)) the chain is Cytoplasmic. The helical transmembrane segment at 992–1012 (AFLWIIYLKVMIGSFYFFHNF) threads the bilayer. Topologically, residues 1013–1022 (DNFFSGSSIS) are extracellular. Residues 1023-1043 (SILYSQTAFAIFHYSLIVAFA) form a helical membrane-spanning segment. Residues 1044–1072 (SYEIDIPYKFIRNFPYIYQLARRKYFLNN) lie on the Cytoplasmic side of the membrane. The chain crosses the membrane as a helical span at residues 1073–1093 (TIIFLNIVESIFSSFISYYIL). Residues 1094–1105 (RGNLFNLITHRK) are Extracellular-facing. A helical membrane pass occupies residues 1106 to 1126 (FTFHIFVLNFFLISEKILLFS). Over 1127–1130 (KTWH) the chain is Cytoplasmic. Residues 1131–1151 (IFFFIMTIIIVSILFIYINIY) traverse the membrane as a helical segment. Residues 1152 to 1171 (TLVDCLITGKCEFSLFDPED) lie on the Extracellular side of the membrane. A helical transmembrane segment spans residues 1172–1192 (SYFWISLLPILYINFIIDKFM). Over 1193 to 1297 (KFVKNKIYPD…YEKRNKLKLR (105 aa)) the chain is Cytoplasmic. The helical transmembrane segment at 1298–1318 (IIILLLFIIFLITFTIQIIIS) threads the bilayer. Topologically, residues 1319 to 1327 (KFIEKKLHS) are extracellular. A helical membrane pass occupies residues 1328-1348 (LSYLTVIYYIVAVLYLIKILI). The Cytoplasmic portion of the chain corresponds to 1349 to 1353 (RNKTN). Residues 1354–1374 (YTYFYIIGKLLLVIGYLLEIS) traverse the membrane as a helical segment. The Extracellular portion of the chain corresponds to 1375–1394 (ENSVNNIINMLVTYSFTVCY). The helical transmembrane segment at 1395–1415 (IFFISFKILEGLVMCIIILSI) threads the bilayer. Over 1416 to 1457 (AIWVYYHKNNNLNAMCTDFCDNPYTSLDNLEYINISCICKQQ) the chain is Cytoplasmic. Residues 1458–1478 (IFTFLICTLSFTLICLFMKYY) form a helical membrane-spanning segment. Residues 1479 to 1500 (EIYYLKKKFLTRYKQKVNLGKQ) are Extracellular-facing. A helical transmembrane segment spans residues 1501-1521 (IEILHTMLPSFLVEYLLVSDP). Over 1522–2563 (KADGIMVGKN…EIINIDLTKK (1042 aa)) the chain is Cytoplasmic. The Guanylate cyclase 1 domain maps to 1541 to 1696 (SVIFCDIDDF…DTVNTASRMK (156 aa)). The segment covering 2463 to 2476 (TMSNSKSGQTNITT) has biased composition (polar residues). Positions 2463 to 2491 (TMSNSKSGQTNITTDNKKSQIKKNGDVNK) are disordered. Positions 2477–2488 (DNKKSQIKKNGD) are enriched in basic and acidic residues. A helical transmembrane segment spans residues 2564 to 2584 (LIIIFVISELILSLCNVIELS). At 2585 to 2594 (YYENKETPND) the chain is on the extracellular side. The chain crosses the membrane as a helical span at residues 2595 to 2615 (FIVIIWLIRSIYLFTITFIWL). Topologically, residues 2616–2634 (LLKTKLKEYKDNSSKMMWT) are cytoplasmic. Residues 2635-2655 (TFILNIFLSSWGIIMIDLACI) form a helical membrane-spanning segment. At 2656–2667 (HYSNLVGNSRER) the chain is on the extracellular side. A helical membrane pass occupies residues 2668–2688 (SIFFMKDATELIISMQLIFVK). The Cytoplasmic portion of the chain corresponds to 2689-2695 (NMLFKHK). A helical membrane pass occupies residues 2696–2716 (FFFFVFFFVFLMYSFFKLFVI). The Extracellular portion of the chain corresponds to 2717-2722 (HVCELR). A helical membrane pass occupies residues 2723–2743 (ICCSILLILSINILYFWYSEY). At 2744-3004 (LDRTQYIIKR…KLREQNKVKG (261 aa)) the chain is on the cytoplasmic side. The Guanylate cyclase 2 domain occupies 2793-2927 (AFLFADIVGF…LDVLIANHIE (135 aa)). The Mg(2+) site is built by Asp-2798, Ile-2799, and Asp-2842.

In the N-terminal section; belongs to the cation transport ATPase (P-type) (TC 3.A.3) family. Type IV subfamily. It in the C-terminal section; belongs to the adenylyl cyclase class-4/guanylyl cyclase family. Mg(2+) serves as cofactor. The cofactor is Mn(2+).

It is found in the membrane. The catalysed reaction is GTP = 3',5'-cyclic GMP + diphosphate. Catalyzes the synthesis of the second messenger cGMP from GTP. Probably by regulating cGMP production, required for ookinete gliding motility, which is necessary for the ookinete to traverse the midgut epithelium of the mosquito. The protein is Guanylate cyclase beta of Plasmodium berghei (strain Anka).